Reading from the N-terminus, the 298-residue chain is Cytidine deaminase (298 aa).

2 consecutive CMP/dCMP-type deaminase domains span residues 47-167 (TEQQ…FGPS) and 186-298 (DSDD…PLLG). 88–90 (NLE) provides a ligand contact to substrate. Zn(2+) is bound at residue histidine 101. Residue glutamate 103 is the Proton donor of the active site. Zn(2+)-binding residues include cysteine 128 and cysteine 131.

It belongs to the cytidine and deoxycytidylate deaminase family. Homodimer. It depends on Zn(2+) as a cofactor.

It carries out the reaction cytidine + H2O + H(+) = uridine + NH4(+). The catalysed reaction is 2'-deoxycytidine + H2O + H(+) = 2'-deoxyuridine + NH4(+). Its function is as follows. This enzyme scavenges exogenous and endogenous cytidine and 2'-deoxycytidine for UMP synthesis. This chain is Cytidine deaminase, found in Shewanella frigidimarina (strain NCIMB 400).